A 567-amino-acid chain; its full sequence is Putative laccase-17 (567 aa).

The N-terminal stretch at 1 to 22 is a signal peptide; sequence MPSRGCSCWLLSLALLCSLAAA. 2 consecutive Plastocyanin-like domains span residues 30–146 and 158–310; these read VIRE…PRDG and ELAP…YGAA. The N-linked (GlcNAc...) asparagine glycan is linked to asparagine 76. Cu cation-binding residues include histidine 80, histidine 82, histidine 125, and histidine 127. N-linked (GlcNAc...) asparagine glycosylation is found at asparagine 187, asparagine 241, asparagine 298, asparagine 312, asparagine 327, asparagine 365, asparagine 368, asparagine 378, asparagine 388, and asparagine 430. Positions 415 to 551 constitute a Plastocyanin-like 3 domain; sequence DFPANPPVQF…AMAFLVDDGV (137 aa). Cu cation contacts are provided by histidine 468, histidine 471, histidine 473, histidine 530, cysteine 531, histidine 532, and histidine 536.

Belongs to the multicopper oxidase family. Requires Cu cation as cofactor.

It is found in the secreted. The protein localises to the extracellular space. The protein resides in the apoplast. The enzyme catalyses 4 hydroquinone + O2 = 4 benzosemiquinone + 2 H2O. Lignin degradation and detoxification of lignin-derived products. This chain is Putative laccase-17 (LAC17), found in Oryza sativa subsp. japonica (Rice).